Reading from the N-terminus, the 296-residue chain is NH(3)-dependent NAD(+) synthetase (296 aa).

30-37 (GVSGGLDS) contributes to the ATP binding site. Aspartate 36 lines the Mg(2+) pocket. Arginine 157 contributes to the deamido-NAD(+) binding site. A Mg(2+)-binding site is contributed by glutamate 182. Lysine 190 and aspartate 197 together coordinate deamido-NAD(+). 2 residues coordinate ATP: lysine 206 and serine 228.

This sequence belongs to the NAD synthetase family. In terms of assembly, homodimer.

The catalysed reaction is deamido-NAD(+) + NH4(+) + ATP = AMP + diphosphate + NAD(+) + H(+). It participates in cofactor biosynthesis; NAD(+) biosynthesis; NAD(+) from deamido-NAD(+) (ammonia route): step 1/1. Catalyzes the ATP-dependent amidation of deamido-NAD to form NAD. Uses ammonia as a nitrogen source. This chain is NH(3)-dependent NAD(+) synthetase, found in Coprothermobacter proteolyticus (strain ATCC 35245 / DSM 5265 / OCM 4 / BT).